The primary structure comprises 445 residues: tRNA(Ile)-lysidine synthase (445 aa).

38 to 43 (SGGLDS) contacts ATP.

This sequence belongs to the tRNA(Ile)-lysidine synthase family.

The protein resides in the cytoplasm. It carries out the reaction cytidine(34) in tRNA(Ile2) + L-lysine + ATP = lysidine(34) in tRNA(Ile2) + AMP + diphosphate + H(+). In terms of biological role, ligates lysine onto the cytidine present at position 34 of the AUA codon-specific tRNA(Ile) that contains the anticodon CAU, in an ATP-dependent manner. Cytidine is converted to lysidine, thus changing the amino acid specificity of the tRNA from methionine to isoleucine. This is tRNA(Ile)-lysidine synthase from Neisseria gonorrhoeae (strain ATCC 700825 / FA 1090).